A 319-amino-acid chain; its full sequence is Lambda-crystallin (319 aa).

A2 carries the post-translational modification N-acetylalanine. S3 is subject to Phosphoserine. NAD(+) contacts are provided by residues 16–17, D36, E97, and K102; that span reads LV. S111 is subject to Phosphoserine.

It belongs to the 3-hydroxyacyl-CoA dehydrogenase family. In terms of assembly, homodimer. As to expression, detected in eye lens, kidney, liver, heart, lung, brain and testis.

It is found in the cytoplasm. The catalysed reaction is L-gulonate + NAD(+) = 3-dehydro-L-gulonate + NADH + H(+). Inhibited by malonate and by inorganic phosphate. In terms of biological role, functions as a crystallin in the rabbit eye lens. Has high L-gulonate 3-dehydrogenase activity. It also exhibits low dehydrogenase activity toward L-3-hydroxybutyrate (HBA) and L-threonate. The sequence is that of Lambda-crystallin (CRYL1) from Oryctolagus cuniculus (Rabbit).